The following is a 438-amino-acid chain: ATP synthase subunit alpha, chloroplastic (438 aa).

170 to 177 (GDRQTGKT) provides a ligand contact to ATP.

The protein belongs to the ATPase alpha/beta chains family. In terms of assembly, F-type ATPases have 2 components, CF(1) - the catalytic core - and CF(0) - the membrane proton channel. CF(1) has five subunits: alpha(3), beta(3), gamma(1), delta(1), epsilon(1). CF(0) has four main subunits: a, b, b' and c.

It is found in the plastid. It localises to the chloroplast thylakoid membrane. The enzyme catalyses ATP + H2O + 4 H(+)(in) = ADP + phosphate + 5 H(+)(out). In terms of biological role, produces ATP from ADP in the presence of a proton gradient across the membrane. The alpha chain is a regulatory subunit. In Ochrosphaera neapolitana, this protein is ATP synthase subunit alpha, chloroplastic.